The primary structure comprises 423 residues: Autophagy-related protein 18 (423 aa).

WD repeat units follow at residues 200 to 240 and 245 to 284; these read AHKT…KLWQ and SSSA…KGGK. Residues 241–245 carry the L/FRRG motif motif; it reads FRRGS. Residues 281 to 317 form a disordered region; sequence KGGKDADDASTEEARSPTPSETPLASSPPLAAGKLDS. Over residues 282-295 the composition is skewed to basic and acidic residues; sequence GGKDADDASTEEAR.

The protein belongs to the WD repeat PROPPIN family. As to quaternary structure, component of the PI(3,5)P2 regulatory complex.

The protein resides in the preautophagosomal structure membrane. It localises to the vacuole membrane. Its subcellular location is the endosome membrane. In terms of biological role, the PI(3,5)P2 regulatory complex regulates both the synthesis and turnover of phosphatidylinositol 3,5-bisphosphate (PtdIns(3,5)P2). Necessary for proper vacuole morphology. Plays an important role in osmotically-induced vacuole fragmentation. Required for cytoplasm to vacuole transport (Cvt) vesicle formation, pexophagy and starvation-induced autophagy. Involved in correct ATG9 trafficking to the pre-autophagosomal structure. Might also be involved in premeiotic DNA replication. In Cryptococcus neoformans var. neoformans serotype D (strain JEC21 / ATCC MYA-565) (Filobasidiella neoformans), this protein is Autophagy-related protein 18 (ATG18).